A 127-amino-acid polypeptide reads, in one-letter code: Large ribosomal subunit protein bL12 (127 aa).

Belongs to the bacterial ribosomal protein bL12 family. In terms of assembly, homodimer. Part of the ribosomal stalk of the 50S ribosomal subunit. Forms a multimeric L10(L12)X complex, where L10 forms an elongated spine to which 2 to 4 L12 dimers bind in a sequential fashion. Binds GTP-bound translation factors.

Its function is as follows. Forms part of the ribosomal stalk which helps the ribosome interact with GTP-bound translation factors. Is thus essential for accurate translation. This is Large ribosomal subunit protein bL12 from Caulobacter vibrioides (strain ATCC 19089 / CIP 103742 / CB 15) (Caulobacter crescentus).